The chain runs to 334 residues: DNA-directed RNA polymerase subunit alpha (334 aa).

Positions 1–232 (MIREKLKVST…DLFIPFLHAE (232 aa)) are alpha N-terminal domain (alpha-NTD). The tract at residues 267–334 (QKEITLKSIF…NILQIENHFV (68 aa)) is alpha C-terminal domain (alpha-CTD).

The protein belongs to the RNA polymerase alpha chain family. As to quaternary structure, in plastids the minimal PEP RNA polymerase catalytic core is composed of four subunits: alpha, beta, beta', and beta''. When a (nuclear-encoded) sigma factor is associated with the core the holoenzyme is formed, which can initiate transcription.

The protein resides in the plastid. It is found in the chloroplast. It carries out the reaction RNA(n) + a ribonucleoside 5'-triphosphate = RNA(n+1) + diphosphate. Functionally, DNA-dependent RNA polymerase catalyzes the transcription of DNA into RNA using the four ribonucleoside triphosphates as substrates. This chain is DNA-directed RNA polymerase subunit alpha, found in Pisum sativum (Garden pea).